A 400-amino-acid polypeptide reads, in one-letter code: Probable phospho-2-dehydro-3-deoxyheptonate aldolase (400 aa).

It belongs to the class-II DAHP synthase family.

It carries out the reaction D-erythrose 4-phosphate + phosphoenolpyruvate + H2O = 7-phospho-2-dehydro-3-deoxy-D-arabino-heptonate + phosphate. It participates in antibiotic biosynthesis; phenazine biosynthesis. The polypeptide is Probable phospho-2-dehydro-3-deoxyheptonate aldolase (phzC) (Pseudomonas fluorescens).